The primary structure comprises 197 residues: MAERENRGRGRGRNREEETPEFADRLVAINRVSKTVKGGKRFGFAALVVVGDQRGRVGFGKGKAKEVPEAIRKATEQAKRQLIRVPLKEGRTLHHDVKGHHGAGKVVMRTAPEGTGIIAGGPMRAVFEMLGVKDVVSKSTGSQNPYNMIRATLDGLRNESSPRQVASRRGKKVADILPKRDDHPQIDGEQAPVSEEA.

Residues methionine 1–glutamate 17 are compositionally biased toward basic and acidic residues. Disordered regions lie at residues methionine 1 to phenylalanine 22 and asparagine 158 to alanine 197. Positions phenylalanine 22–valine 85 constitute an S5 DRBM domain. Basic and acidic residues predominate over residues lysine 172 to isoleucine 186.

The protein belongs to the universal ribosomal protein uS5 family. Part of the 30S ribosomal subunit. Contacts proteins S4 and S8.

With S4 and S12 plays an important role in translational accuracy. Functionally, located at the back of the 30S subunit body where it stabilizes the conformation of the head with respect to the body. The chain is Small ribosomal subunit protein uS5 from Jannaschia sp. (strain CCS1).